Here is a 397-residue protein sequence, read N- to C-terminus: Succinate--CoA ligase [ADP-forming] subunit beta (397 aa).

Residues 9–254 (KALLRSYGAP…ETEEDPKELA (246 aa)) form the ATP-grasp domain. ATP contacts are provided by residues lysine 46, 53 to 55 (GRG), glutamate 109, serine 112, and glutamate 117. Residues asparagine 209 and aspartate 223 each coordinate Mg(2+). Residues asparagine 274 and 331-333 (GIM) contribute to the substrate site.

This sequence belongs to the succinate/malate CoA ligase beta subunit family. Heterotetramer of two alpha and two beta subunits. Requires Mg(2+) as cofactor.

It carries out the reaction succinate + ATP + CoA = succinyl-CoA + ADP + phosphate. It catalyses the reaction GTP + succinate + CoA = succinyl-CoA + GDP + phosphate. The protein operates within carbohydrate metabolism; tricarboxylic acid cycle; succinate from succinyl-CoA (ligase route): step 1/1. Its function is as follows. Succinyl-CoA synthetase functions in the citric acid cycle (TCA), coupling the hydrolysis of succinyl-CoA to the synthesis of either ATP or GTP and thus represents the only step of substrate-level phosphorylation in the TCA. The beta subunit provides nucleotide specificity of the enzyme and binds the substrate succinate, while the binding sites for coenzyme A and phosphate are found in the alpha subunit. The polypeptide is Succinate--CoA ligase [ADP-forming] subunit beta (Cereibacter sphaeroides (strain ATCC 17025 / ATH 2.4.3) (Rhodobacter sphaeroides)).